Consider the following 194-residue polypeptide: ATP-dependent Clp protease proteolytic subunit (194 aa).

The active-site Nucleophile is S98. Residue H123 is part of the active site.

The protein belongs to the peptidase S14 family. Fourteen ClpP subunits assemble into 2 heptameric rings which stack back to back to give a disk-like structure with a central cavity, resembling the structure of eukaryotic proteasomes.

The protein resides in the cytoplasm. It catalyses the reaction Hydrolysis of proteins to small peptides in the presence of ATP and magnesium. alpha-casein is the usual test substrate. In the absence of ATP, only oligopeptides shorter than five residues are hydrolyzed (such as succinyl-Leu-Tyr-|-NHMec, and Leu-Tyr-Leu-|-Tyr-Trp, in which cleavage of the -Tyr-|-Leu- and -Tyr-|-Trp bonds also occurs).. In terms of biological role, cleaves peptides in various proteins in a process that requires ATP hydrolysis. Has a chymotrypsin-like activity. Plays a major role in the degradation of misfolded proteins. This chain is ATP-dependent Clp protease proteolytic subunit, found in Staphylococcus epidermidis (strain ATCC 35984 / DSM 28319 / BCRC 17069 / CCUG 31568 / BM 3577 / RP62A).